Consider the following 370-residue polypeptide: Putative FBD-associated F-box protein At1g50980 (370 aa).

The F-box domain occupies 31–77 (IRTISEFPDKVLLKILSLLPSKDVVATGVLSKRWRSLWKDVKTFRTS). Residues 292–343 (LMGNQPDLIPKSLSSHLEILEWRQYNDTAQEREAAKYILANASGLRKATFYT) form the FBD domain.

The sequence is that of Putative FBD-associated F-box protein At1g50980 from Arabidopsis thaliana (Mouse-ear cress).